Consider the following 391-residue polypeptide: E1B 55 kDa protein (391 aa).

A Phosphoserine modification is found at Ser387.

Belongs to the adenoviridae E1B 55 kDa protein family. As to quaternary structure, interacts with host PML-4 and PML-5; this interaction promotes efficient subnuclear targeting of E1B-55K to PML nuclear bodies. Interacts with E4-ORF3 protein. Interacts with E4-ORF6 protein.

The protein localises to the host nucleus. It localises to the host cytoplasm. Functionally, plays a major role to prevent cellular inhibition of viral genome replication. Assembles an SCF-like E3 ubiquitin ligase complex based on the cellular proteins ELOB, ELOC, CUL5 and RBX1, in cooperation with viral E4orf6. This viral RING-type ligase ubiquitinates cellular substrates and targets them to proteasomal degradation: TP53/p53, LIG4, MRE11-RAD50-NBS1 (MRN) complex, ITGA3, DAXX and BLM. E1B-55K probably acts as the substrate-specific adapter of the SCF-like E3 ubiquitin ligase complex. Degradation of host TP53/p53 activity is essential for preventing E1A-induced TP53 accumulation that would otherwise lead to cell apoptosis and growth arrest. E1B-55K also inactivates TP53 transcription-factor activity by binding its transactivation domain. E1B-55K also functions as a SUMO1 E3 ligase for TP53 which causes the latter to be sequestered in promyelocytic leukemia (PML) nuclear bodies thereby contributing to maximal inhibition of TP53 function. This is E1B 55 kDa protein from Tree shrew adenovirus serotype 1 (TSAdV-1).